The following is a 68-amino-acid chain: DNA-directed RNA polymerase subunit omega (68 aa).

This sequence belongs to the RNA polymerase subunit omega family. The RNAP catalytic core consists of 2 alpha, 1 beta, 1 beta' and 1 omega subunit. When a sigma factor is associated with the core the holoenzyme is formed, which can initiate transcription.

It catalyses the reaction RNA(n) + a ribonucleoside 5'-triphosphate = RNA(n+1) + diphosphate. In terms of biological role, promotes RNA polymerase assembly. Latches the N- and C-terminal regions of the beta' subunit thereby facilitating its interaction with the beta and alpha subunits. The protein is DNA-directed RNA polymerase subunit omega of Geobacter sp. (strain M21).